The sequence spans 146 residues: Hut operon positive regulatory protein (146 aa).

Belongs to the HutP family. As to quaternary structure, homohexamer.

In terms of biological role, antiterminator that binds to cis-acting regulatory sequences on the mRNA in the presence of histidine, thereby suppressing transcription termination and activating the hut operon for histidine utilization. In Bacillus cytotoxicus (strain DSM 22905 / CIP 110041 / 391-98 / NVH 391-98), this protein is Hut operon positive regulatory protein.